The following is a 318-amino-acid chain: Epithelial-stromal interaction protein 1 (318 aa).

The tract at residues 1 to 60 is disordered; it reads MNTRNRVVNSGLGASPASRPTRDPQDPSGRQGELSPVEDQREGLEAAPKGPSRESVVHAG. Coiled coils occupy residues 73-188 and 240-280; these read NINR…HQQY and LKAE…HQTE.

Highly expressed in placenta, small intestine, spleen, kidney, thymus, liver, salivary gland and testes. Weakly expressed in breast, skeletal muscle and colon. Highly expressed in breast cancer upon interaction between tumor cells and stromal cells in vitro. Expressed in blood mononuclear cells from patients with systemic lupus erythematosus (SLE).

Its function is as follows. Plays a role in M1 macrophage polarization and is required for the proper regulation of gene expression during M1 versus M2 macrophage differentiation. Might play a role in RELA/p65 and STAT1 phosphorylation and nuclear localization upon activation of macrophages. The sequence is that of Epithelial-stromal interaction protein 1 (EPSTI1) from Homo sapiens (Human).